A 401-amino-acid polypeptide reads, in one-letter code: Type 3 secretion system translocon protein SctE (401 aa).

Positions 129–160 (IQRLHEQNMKKIEENQEKIKETEENAKQVKKS) form a coiled coil. The next 2 membrane-spanning stretches (helical) occupy residues 176-196 (VIVG…AMMV) and 224-244 (ILGP…TVMT). The stretch at 345–379 (LALNKADMAALQSIIDRLKEELSHLSESHQQVMEL) forms a coiled coil.

Belongs to the SctE/SipB/YopB family. In terms of assembly, the core secretion machinery of the T3SS is composed of approximately 20 different proteins, including cytoplasmic components, a base, an export apparatus and a needle. This subunit is involved in the formation of a pore, called the translocon, in host membrane. Interacts with YopD/SctB. Together with YopD/SctB, forms a multimeric integral membrane complex.

It is found in the secreted. The protein resides in the host membrane. Component of the type III secretion system (T3SS), also called injectisome, which is used to inject bacterial effector proteins into eukaryotic host cells. YopB/SctE and YopD/SctB are inserted into the host membrane where they form a pore and allow the translocation of effector proteins into the cytosol of target cells. Is an essential virulence determinant. Required for YopE and YopH translocation. Shows membrane disruptive activity in vitro. Its function is as follows. Interaction with the host cell triggers a signaling response, via activation of the small GTPase Ras, the MAPK kinases ERK and JNK and the nuclear factor NF-kappa-B pathways, and production of the proinflammatory cytokine interleukin-8 (IL-8). YopB/SctE-dependent signaling response is counteracted by YopE, YopH and YopJ in infected host cells. YopB/SctE is directly responsible for signaling and its insertion in the membrane is important to activate the signaling response in the host cell. This Yersinia pseudotuberculosis serotype I (strain IP32953) protein is Type 3 secretion system translocon protein SctE.